Here is a 330-residue protein sequence, read N- to C-terminus: Carbonic anhydrase 1 (330 aa).

The segment at methionine 1–alanine 109 is chloroplast transit peptide-like.

The protein belongs to the beta-class carbonic anhydrase family. Homohexamer.

The protein localises to the cytoplasm. It carries out the reaction hydrogencarbonate + H(+) = CO2 + H2O. In terms of biological role, reversible hydration of carbon dioxide. This is Carbonic anhydrase 1 from Flaveria linearis (Narrowleaf yellowtops).